The primary structure comprises 339 residues: GTPase Obg (339 aa).

Residues 1-158 (MKFLDQVDLR…RDLTFELKLM (158 aa)) enclose the Obg domain. 2 disordered regions span residues 66–86 (FAED…GEDK) and 125–148 (GNAF…PGEE). A compositionally biased stretch (basic and acidic residues) spans 72–86 (PGGRREQTGASGEDK). Positions 129–138 (FKSSTNQAPR) are enriched in polar residues. The 171-residue stretch at 159 to 329 (ADVGLVGFPN…LKYTLFDTVH (171 aa)) folds into the OBG-type G domain. GTP is bound by residues 165 to 172 (GFPNAGKS), 190 to 194 (FTTLT), 212 to 215 (DIPG), 279 to 282 (SKID), and 310 to 312 (SAV). Residues Ser172 and Thr192 each coordinate Mg(2+).

This sequence belongs to the TRAFAC class OBG-HflX-like GTPase superfamily. OBG GTPase family. In terms of assembly, monomer. Requires Mg(2+) as cofactor.

It is found in the cytoplasm. Functionally, an essential GTPase which binds GTP, GDP and possibly (p)ppGpp with moderate affinity, with high nucleotide exchange rates and a fairly low GTP hydrolysis rate. Plays a role in control of the cell cycle, stress response, ribosome biogenesis and in those bacteria that undergo differentiation, in morphogenesis control. In Salinibacter ruber (strain DSM 13855 / M31), this protein is GTPase Obg.